The chain runs to 485 residues: Glycogen synthase (485 aa).

ADP-alpha-D-glucose is bound at residue Lys-15.

Belongs to the glycosyltransferase 1 family. Bacterial/plant glycogen synthase subfamily.

The enzyme catalyses [(1-&gt;4)-alpha-D-glucosyl](n) + ADP-alpha-D-glucose = [(1-&gt;4)-alpha-D-glucosyl](n+1) + ADP + H(+). It participates in glycan biosynthesis; glycogen biosynthesis. Functionally, synthesizes alpha-1,4-glucan chains using ADP-glucose. This is Glycogen synthase from Francisella philomiragia subsp. philomiragia (strain ATCC 25017 / CCUG 19701 / FSC 153 / O#319-036).